Consider the following 62-residue polypeptide: Statherin (62 aa).

An N-terminal signal peptide occupies residues 1 to 19 (MKFLVFAFILALMVSMIGA). The segment at 20 to 25 (DSSEEK) is hydroxyapatite-binding; inhibits crystal growth. Phosphoserine is present on residues serine 21 and serine 22. Positions 25–56 (KFLRRIGRFGYGYGPYQPVPEQPLYPQPYQPQ) form a cross-link, isoglutamyl lysine isopeptide (Lys-Gln); in form cyclo-statherin Q-37. Positions 25 to 58 (KFLRRIGRFGYGYGPYQPVPEQPLYPQPYQPQYQ) form a cross-link, isoglutamyl lysine isopeptide (Lys-Gln); in form cyclo-statherin Q-39. Positions 38–62 (GPYQPVPEQPLYPQPYQPQYQQYTF) are hydrophobic; inhibits precipitation of calcium phosphate salts.

It belongs to the histatin/statherin family. In terms of processing, substrate for transglutaminase-2. More than 95% of the cyclized peptide is cyclo-statherin Q-37, and less than 5% is cyclo-statherin Q-39. Cyclized forms account for about 1% of total statherin in saliva. Sulfated on tyrosine residues. As to expression, secreted by parotid and submandibular glands.

It localises to the secreted. Functionally, salivary protein that stabilizes saliva supersaturated with calcium salts by inhibiting the precipitation of calcium phosphate salts. It also modulates hydroxyapatite crystal formation on the tooth surface. The polypeptide is Statherin (STATH) (Homo sapiens (Human)).